The following is a 475-amino-acid chain: Probable proline--tRNA ligase, mitochondrial (475 aa).

The transit peptide at 1–29 (MEGLLTRCRALPALATCSRQLSGYVPCRF) directs the protein to the mitochondrion.

It belongs to the class-II aminoacyl-tRNA synthetase family.

It is found in the mitochondrion matrix. The enzyme catalyses tRNA(Pro) + L-proline + ATP = L-prolyl-tRNA(Pro) + AMP + diphosphate. Functionally, mitochondrial aminoacyl-tRNA synthetase that catalyzes the specific attachment of the proline amino acid (aa) to the homologous transfer RNA (tRNA), further participating in protein synthesis. The reaction occurs in a two steps: proline is first activated by ATP to form Pro-AMP and then transferred to the acceptor end of tRNA(Pro). This chain is Probable proline--tRNA ligase, mitochondrial, found in Homo sapiens (Human).